Reading from the N-terminus, the 119-residue chain is MKEKSVKLQRTESLLKEVIPEALSTLSDTRLNSLGVVEVDCSKGKYHAEVYLDAPFATPEEKREILRQLRLAEGTIRDHCLSATGWFKCPRFHFNFDDSTDKANRLDAIFEQLKKERES.

This sequence belongs to the RbfA family. In terms of assembly, monomer. Binds 30S ribosomal subunits, but not 50S ribosomal subunits or 70S ribosomes.

It is found in the cytoplasm. One of several proteins that assist in the late maturation steps of the functional core of the 30S ribosomal subunit. Associates with free 30S ribosomal subunits (but not with 30S subunits that are part of 70S ribosomes or polysomes). Required for efficient processing of 16S rRNA. May interact with the 5'-terminal helix region of 16S rRNA. The polypeptide is Ribosome-binding factor A (Wolinella succinogenes (strain ATCC 29543 / DSM 1740 / CCUG 13145 / JCM 31913 / LMG 7466 / NCTC 11488 / FDC 602W) (Vibrio succinogenes)).